The sequence spans 360 residues: Acetylxylan esterase / glucomannan deacetylase (360 aa).

The first 21 residues, 1-21, serve as a signal peptide directing secretion; that stretch reads MKPHALIGLLAGMLLSSSLYA. Ser151 functions as the Nucleophile in the catalytic mechanism.

The protein belongs to the carbohydrate esterase 2 (CE2) family.

It is found in the secreted. It carries out the reaction Deacetylation of xylans and xylo-oligosaccharides.. It participates in glycan degradation; xylan degradation. Involved in the degradation of plant cell wall polysaccharides. Catalyzes the deacetylation of acetylated birchwood xylan and glucomannan, with a large preference for the latter, and of the synthetic substrate 4-nitrophenyl acetate (4-NPAc). This is Acetylxylan esterase / glucomannan deacetylase from Cellvibrio japonicus (strain Ueda107) (Pseudomonas fluorescens subsp. cellulosa).